A 431-amino-acid polypeptide reads, in one-letter code: Glutamate-1-semialdehyde 2,1-aminomutase (431 aa).

An N6-(pyridoxal phosphate)lysine modification is found at Lys269.

Belongs to the class-III pyridoxal-phosphate-dependent aminotransferase family. HemL subfamily. As to quaternary structure, homodimer. The cofactor is pyridoxal 5'-phosphate.

It is found in the cytoplasm. It catalyses the reaction (S)-4-amino-5-oxopentanoate = 5-aminolevulinate. It participates in porphyrin-containing compound metabolism; protoporphyrin-IX biosynthesis; 5-aminolevulinate from L-glutamyl-tRNA(Glu): step 2/2. Its pathway is porphyrin-containing compound metabolism; chlorophyll biosynthesis. This Pelodictyon phaeoclathratiforme (strain DSM 5477 / BU-1) protein is Glutamate-1-semialdehyde 2,1-aminomutase.